The primary structure comprises 612 residues: MSTSFQEFKAFCNKVGLDFQWLNLQSSKSVPENGSSEGFSAVSDTVQENIRPATEPLNVNQSKDPVSNFFYDVKNAPLWNVYKRNHSGHSSAEACSGVSSRQAPKNIPEAMVKETVLSNHDNVTIINELLPTSSAMHQEESTAMTTSYLLSHSVNDTCNVMFSSSSHNRAMLPSSLVQRNNATTSPTTDSASENNESVPSLTSSVSTSSSVYSSWNPPHSPHISSFPDGNFASLNAEVTCFDFRRTKDSRTKETNESIIPTEIYCPTNSTDHHKHYPSRKSKQDACAPAPCNQNISCSVVSTAEFSQSNHTLTTVVPSYMQQYLDRPQNWFESKMGKYCPLFLRSTKNIDYDSLEFKFERKMIAVQYLLLDEQSEPRRYYNPSNKSIPFWKRPFNFDTMPSYDQLMEEAECRFYSYQYKYEGFQRIEPYSISCPWKNTQREIDLVLDHIHFSLDVGEKKSLNRKGNITLDTLDSKVDPNIQIKPYQIFPSNNLVYEGLPHPAEQSLILSPDTSLIERAFQALIDICKESIPSSNDCSTRNNNSAPQLTVPEPSKPCRLLLVRESRTATELKTNKKLWLHSQRRNIEVTVPMHPSERGTKSWLRKWLSTFVHQ.

The span at 176–196 (LVQRNNATTSPTTDSASENNE) shows a compositional bias: polar residues. The disordered stretch occupies residues 176-203 (LVQRNNATTSPTTDSASENNESVPSLTS).

The protein to yeast YNL034w.

This is an uncharacterized protein from Saccharomyces cerevisiae (strain ATCC 204508 / S288c) (Baker's yeast).